The chain runs to 155 residues: Nuclear cap-binding protein subunit 2 (155 aa).

MRNA is bound by residues tyrosine 19, tyrosine 42, 111–115, 122–126, and 132–133; these read RTDWD, RQYGR, and QV. One can recognise an RRM domain in the interval 39–117; the sequence is ATLYVGNLSF…RIIRTDWDAG (79 aa). Positions 121-155 are disordered; that stretch reads GRQYGRGKSGGQVRDEYRQDYDPARGGYGKMVQKS. Over residues 133 to 143 the composition is skewed to basic and acidic residues; the sequence is VRDEYRQDYDP.

Belongs to the RRM NCBP2 family. As to quaternary structure, component of the nuclear cap-binding complex (CBC), a heterodimer composed of ncbp1/cbp80 and ncbp2/cbp20 that interacts with m7GpppG-capped RNA.

It localises to the nucleus. The protein resides in the cytoplasm. Component of the cap-binding complex (CBC), which binds co-transcriptionally to the 5' cap of pre-mRNAs and is involved in various processes such as pre-mRNA splicing, translation regulation, nonsense-mediated mRNA decay, RNA-mediated gene silencing (RNAi) by microRNAs (miRNAs) and mRNA export. The CBC complex is involved in mRNA export from the nucleus, leading to the recruitment of the mRNA export machinery to the 5' end of mRNA and to mRNA export in a 5' to 3' direction through the nuclear pore. The CBC complex is also involved in mediating U snRNA and intronless mRNAs export from the nucleus. The CBC complex is essential for a pioneer round of mRNA translation, before steady state translation when the CBC complex is replaced by cytoplasmic cap-binding protein eIF4E. The pioneer round of mRNA translation mediated by the CBC complex plays a central role in nonsense-mediated mRNA decay (NMD), NMD only taking place in mRNAs bound to the CBC complex, but not on eIF4E-bound mRNAs. The CBC complex enhances NMD in mRNAs containing at least one exon-junction complex (EJC), promoting the interaction between upf1 and upf2. The CBC complex is also involved in 'failsafe' NMD, which is independent of the EJC complex, while it does not participate in Staufen-mediated mRNA decay (SMD). During cell proliferation, the CBC complex is also involved in microRNAs (miRNAs) biogenesis via its interaction with srrt/ars2, thereby being required for miRNA-mediated RNA interference. The CBC complex also acts as a negative regulator of parn, thereby acting as an inhibitor of mRNA deadenylation. In the CBC complex, ncbp2/cbp20 recognizes and binds capped RNAs (m7GpppG-capped RNA) but requires ncbp1/cbp80 to stabilize the movement of its N-terminal loop and lock the CBC into a high affinity cap-binding state with the cap structure. The conventional cap-binding complex with NCBP2 binds both small nuclear RNA (snRNA) and messenger (mRNA) and is involved in their export from the nucleus. The polypeptide is Nuclear cap-binding protein subunit 2 (ncbp2) (Danio rerio (Zebrafish)).